We begin with the raw amino-acid sequence, 324 residues long: 1-deoxyxylulose-5-phosphate synthase YajO (324 aa).

Y61 (proton donor) is an active-site residue.

It belongs to the aldo/keto reductase family. Aldo/keto reductase 2 subfamily.

It carries out the reaction D-ribulose 5-phosphate + AH2 = 1-deoxy-D-xylulose 5-phosphate + A + H2O. Its activity is regulated as follows. NADH, NADPH or ATP do not increase activity. Functionally, catalyzes the conversion of ribulose 5-phosphate (Ru5P) to 1-deoxy-D-xylulose 5-phosphate (DXP), providing a direct route from pentoses to terpenes. May play a role in biosynthesis of DXP under conditions of thiamine starvation. In Escherichia coli (strain K12), this protein is 1-deoxyxylulose-5-phosphate synthase YajO (yajO).